The primary structure comprises 765 residues: Ubiquitin-like modifier-activating enzyme atg7 (765 aa).

The GXGXXG motif signature appears at 436–441; it reads GAGTLG. Residue Cys-616 is the Glycyl thioester intermediate of the active site. 2 disordered regions span residues 646–670 and 744–765; these read AAPA…PPNH and AAND…PELL. Residues 721–760 form a homodimerization region; that stretch reads ALTEKDYITELSGLAEVQRKAEAAANDVEWDSDEEGMEDE. Acidic residues predominate over residues 748–765; sequence VEWDSDEEGMEDEEPELL.

Belongs to the ATG7 family. In terms of assembly, homodimer. Interacts with ATG8 through a thioester bond between Cys-616 and the C-terminal Gly of ATG8 and with ATG12 through a thioester bond between Cys-616 and the C-terminal Gly of ATG12. Also interacts with ATG3.

The protein localises to the cytoplasm. It localises to the preautophagosomal structure. E1-like activating enzyme involved in the 2 ubiquitin-like systems required for cytoplasm to vacuole transport (Cvt) and autophagy. Activates ATG12 for its conjugation with ATG5 and ATG8 for its conjugation with phosphatidylethanolamine. Both systems are needed for the ATG8 association to Cvt vesicles and autophagosomes membranes. Autophagy is essential for maintenance of amino acid levels and protein synthesis under nitrogen starvation. Required for selective autophagic degradation of the nucleus (nucleophagy) as well as for mitophagy which contributes to regulate mitochondrial quantity and quality by eliminating the mitochondria to a basal level to fulfill cellular energy requirements and preventing excess ROS production. Required for normal mycelial growth and conidiogenesis, and regulates sclerotial formation. Plays an essential role in pathogenesis. The chain is Ubiquitin-like modifier-activating enzyme atg7 from Botryotinia fuckeliana (strain BcDW1) (Noble rot fungus).